The following is a 196-amino-acid chain: Putative 3-methyladenine DNA glycosylase (196 aa).

This sequence belongs to the DNA glycosylase MPG family.

In Bacillus velezensis (strain DSM 23117 / BGSC 10A6 / LMG 26770 / FZB42) (Bacillus amyloliquefaciens subsp. plantarum), this protein is Putative 3-methyladenine DNA glycosylase.